The primary structure comprises 335 residues: Glyceraldehyde-3-phosphate dehydrogenase (335 aa).

Residues 12–13 (RI), D36, R80, and S122 contribute to the NAD(+) site. D-glyceraldehyde 3-phosphate-binding positions include 152–154 (SCT), T183, R198, 211–212 (TG), and R234. C153 acts as the Nucleophile in catalysis. Residue N316 coordinates NAD(+).

Belongs to the glyceraldehyde-3-phosphate dehydrogenase family. As to quaternary structure, homotetramer.

It localises to the cytoplasm. The enzyme catalyses D-glyceraldehyde 3-phosphate + phosphate + NAD(+) = (2R)-3-phospho-glyceroyl phosphate + NADH + H(+). It functions in the pathway carbohydrate degradation; glycolysis; pyruvate from D-glyceraldehyde 3-phosphate: step 1/5. Catalyzes the oxidative phosphorylation of glyceraldehyde 3-phosphate (G3P) to 1,3-bisphosphoglycerate (BPG) using the cofactor NAD. The first reaction step involves the formation of a hemiacetal intermediate between G3P and a cysteine residue, and this hemiacetal intermediate is then oxidized to a thioester, with concomitant reduction of NAD to NADH. The reduced NADH is then exchanged with the second NAD, and the thioester is attacked by a nucleophilic inorganic phosphate to produce BPG. In Xanthobacter flavus, this protein is Glyceraldehyde-3-phosphate dehydrogenase (gap).